The chain runs to 338 residues: (2Z,6E)-hedycaryol synthase (338 aa).

Asp82 and Glu87 together coordinate Mg(2+). Positions 82–87 (DDQIDE) match the DDXXXE motif motif. Arg175 lines the substrate pocket. The Mg(2+) site is built by Asn221 and Ser225. The short motif at 221–229 (NDVFSVERE) is the NXXXSXXXE motif element. Residue Arg228 coordinates substrate. Glu229 contacts Mg(2+).

This sequence belongs to the terpene synthase family. In terms of assembly, homodimer. The cofactor is Mg(2+).

The catalysed reaction is (2E,6E)-farnesyl diphosphate + H2O = (2Z,6E)-hedycaryol + diphosphate. Its pathway is secondary metabolite biosynthesis; terpenoid biosynthesis. In terms of biological role, catalyzes the conversion of (2E,6E)-farnesyl diphosphate (FPP) into (2Z,6E)-hedycaryol via a 1,11-cyclization. This is (2Z,6E)-hedycaryol synthase from Kitasatospora setae (strain ATCC 33774 / DSM 43861 / JCM 3304 / KCC A-0304 / NBRC 14216 / KM-6054) (Streptomyces setae).